A 320-amino-acid polypeptide reads, in one-letter code: MPGYCFEIFNVFDFFDKTNKANFWEFVRLEHAQVMDIPISGTVNHFLKPENLRKNRYHDVTCWDNSRVVLSSHGSKMYDYGDSDGKKIIVTSQDSDSTYIHASFVNGFKEANKFICCQGPKESTSGDFWKMVSEHNSSVIVSLTETDDEDQVCYEYWVKEEDYELAFGRYVVKTLEIIEESSFTRTRLRLTDVSSDTSREIHHFWYPHWSDYGNPTNPAEILNLISKVNQKRKEMKKTADSQPGPIVVHCSAGIGRTGTFCTIDNALSQLRKEQTVCLPQTVLKIRKQRHSSVFLPEQYAFCYKAVRYALIREIKKKFFY.

One can recognise a Tyrosine-protein phosphatase domain in the interval 22-309 (NFWEFVRLEH…AFCYKAVRYA (288 aa)). Residue cysteine 250 is the Phosphocysteine intermediate of the active site.

This sequence belongs to the protein-tyrosine phosphatase family.

It catalyses the reaction O-phospho-L-tyrosyl-[protein] + H2O = L-tyrosyl-[protein] + phosphate. In terms of biological role, suppresses host immune cell adhesion and phagocytosis. This is Tyrosine phosphatase H3 (H3) from Microplitis demolitor (Parasitoid wasp).